A 1097-amino-acid chain; its full sequence is DNA-directed RNA polymerase subunit beta (1097 aa).

Positions 1072-1097 (QDINPRRNTPSRPTYESLGTSEYEED) are disordered. Over residues 1077–1091 (RRNTPSRPTYESLGT) the composition is skewed to polar residues.

This sequence belongs to the RNA polymerase beta chain family. In cyanobacteria the RNAP catalytic core is composed of 2 alpha, 1 beta, 1 beta', 1 gamma and 1 omega subunit. When a sigma factor is associated with the core the holoenzyme is formed, which can initiate transcription.

The enzyme catalyses RNA(n) + a ribonucleoside 5'-triphosphate = RNA(n+1) + diphosphate. Functionally, DNA-dependent RNA polymerase catalyzes the transcription of DNA into RNA using the four ribonucleoside triphosphates as substrates. This chain is DNA-directed RNA polymerase subunit beta, found in Prochlorococcus marinus (strain MIT 9301).